We begin with the raw amino-acid sequence, 84 residues long: Polcalcin Ole e 3 (84 aa).

EF-hand domains are found at residues 6–40 (QEVA…TLGS) and 41–76 (VTPE…NRGL). Residues aspartate 19, asparagine 21, aspartate 23, lysine 25, glutamate 30, aspartate 54, aspartate 56, aspartate 58, and glutamate 65 each contribute to the Ca(2+) site.

In terms of tissue distribution, expressed exclusively in mature pollen.

Its subcellular location is the endomembrane system. This chain is Polcalcin Ole e 3 (OLE3), found in Olea europaea (Common olive).